A 226-amino-acid chain; its full sequence is MKAIRIAIDGPASSGKSTVAKIIAKNLGYTYLDTGAMYRSATYIALKNGYHKEDVNLILQELAKRPISFKKAADGSQLVFLGDQDVTMAIRQNDVTNNVSWVSALPEIREELVNQQRRIARTGAIIMDGRDIGTVVLPDAELKIFLIASVEERAQRRYQENIEKGIAADFDTLKAEIAARDYKDSHRQVSPLKAADDAIIFDTTGITISAVVQFIQEKAEKIIDMA.

10 to 18 (GPASSGKST) is an ATP binding site.

This sequence belongs to the cytidylate kinase family. Type 1 subfamily.

The protein localises to the cytoplasm. The enzyme catalyses CMP + ATP = CDP + ADP. It carries out the reaction dCMP + ATP = dCDP + ADP. The sequence is that of Cytidylate kinase from Streptococcus equi subsp. equi (strain 4047).